Here is a 130-residue protein sequence, read N- to C-terminus: MDKIDEIVEKIKLLSLLEASELVKRIEDTFQVNVSNIQPVTGLSSNLTTTQQTPESAEVKEKWDVILENVPADKKIAILKVVRSITGLGLKEAKEFVESVPKIIKQSISQADAEHIKQQIEDAGASVVLK.

It belongs to the bacterial ribosomal protein bL12 family. In terms of assembly, homodimer. Part of the ribosomal stalk of the 50S ribosomal subunit. Forms a multimeric L10(L12)X complex, where L10 forms an elongated spine to which 2 to 4 L12 dimers bind in a sequential fashion. Binds GTP-bound translation factors.

The protein resides in the plastid. The protein localises to the chloroplast. Forms part of the ribosomal stalk which helps the ribosome interact with GTP-bound translation factors. Is thus essential for accurate translation. The polypeptide is Large ribosomal subunit protein bL12c (Cyanidium caldarium (Red alga)).